A 251-amino-acid chain; its full sequence is MKKLIAANWKMYKTIDEARATGRELVSAVAGSLPADREVLVCPPFTALHALHDTFKDVEGFAIGGQDVYPATEGAYTGEIAPGMLLDAGCGWVLTGHSERRHILGEDDETVARKTAFSLKAGLRVVLCIGEKLDEREAGRLEDVLAHQLQVGLADVDATYVPQSLVVAYEPVWAIGTGKVAGPAEVVEAHALVRSLLEARYGRDGAAIRILYGGSVKPDNAAELLSLDNVDGLLVGGASLQAVSFSRIILA.

8–10 (NWK) is a binding site for substrate. Histidine 97 serves as the catalytic Electrophile. The active-site Proton acceptor is the glutamate 170. Substrate-binding positions include glycine 176, serine 215, and 236-237 (GG).

The protein belongs to the triosephosphate isomerase family. Homodimer.

The protein localises to the cytoplasm. It carries out the reaction D-glyceraldehyde 3-phosphate = dihydroxyacetone phosphate. Its pathway is carbohydrate biosynthesis; gluconeogenesis. It functions in the pathway carbohydrate degradation; glycolysis; D-glyceraldehyde 3-phosphate from glycerone phosphate: step 1/1. Functionally, involved in the gluconeogenesis. Catalyzes stereospecifically the conversion of dihydroxyacetone phosphate (DHAP) to D-glyceraldehyde-3-phosphate (G3P). This chain is Triosephosphate isomerase, found in Nitratidesulfovibrio vulgaris (strain ATCC 29579 / DSM 644 / CCUG 34227 / NCIMB 8303 / VKM B-1760 / Hildenborough) (Desulfovibrio vulgaris).